Reading from the N-terminus, the 203-residue chain is Histidine biosynthesis bifunctional protein HisIE (203 aa).

Residues 1–114 (MLTEQQRREL…FGDTAHQWLF (114 aa)) form a phosphoribosyl-AMP cyclohydrolase region. The phosphoribosyl-ATP pyrophosphohydrolase stretch occupies residues 115–203 (LYQLEQLLAE…VIENLRKRHQ (89 aa)).

The protein in the N-terminal section; belongs to the PRA-CH family. It in the C-terminal section; belongs to the PRA-PH family.

The protein localises to the cytoplasm. The enzyme catalyses 1-(5-phospho-beta-D-ribosyl)-ATP + H2O = 1-(5-phospho-beta-D-ribosyl)-5'-AMP + diphosphate + H(+). It catalyses the reaction 1-(5-phospho-beta-D-ribosyl)-5'-AMP + H2O = 1-(5-phospho-beta-D-ribosyl)-5-[(5-phospho-beta-D-ribosylamino)methylideneamino]imidazole-4-carboxamide. Its pathway is amino-acid biosynthesis; L-histidine biosynthesis; L-histidine from 5-phospho-alpha-D-ribose 1-diphosphate: step 2/9. It participates in amino-acid biosynthesis; L-histidine biosynthesis; L-histidine from 5-phospho-alpha-D-ribose 1-diphosphate: step 3/9. The protein is Histidine biosynthesis bifunctional protein HisIE of Shigella sonnei (strain Ss046).